The chain runs to 407 residues: TOM1-like protein 1 (407 aa).

N-acetylglycine is present on Gly2. In terms of domain architecture, VHS spans Ala55–Pro183. The 88-residue stretch at Phe228 to Lys315 folds into the GAT domain. A disordered region spans residues Lys315–Phe407. A Phosphoserine modification is found at Ser337. The segment covering Ser337 to Val347 has biased composition (basic and acidic residues). Positions Val353 to Gly364 are enriched in gly residues. Over residues Pro388–Phe407 the composition is skewed to basic and acidic residues.

It belongs to the TOM1 family. In terms of tissue distribution, ubiquitously expressed.

It is found in the membrane. Functionally, might contribute to the loading of the ESCRT machinery. This is TOM1-like protein 1 from Arabidopsis thaliana (Mouse-ear cress).